Here is a 221-residue protein sequence, read N- to C-terminus: 7-cyano-7-deazaguanine synthase (221 aa).

10 to 20 (FSGGQDSTTCL) contributes to the ATP binding site. The Zn(2+) site is built by Cys-186, Cys-195, Cys-198, and Cys-201.

Belongs to the QueC family. Homodimer. Requires Zn(2+) as cofactor.

The enzyme catalyses 7-carboxy-7-deazaguanine + NH4(+) + ATP = 7-cyano-7-deazaguanine + ADP + phosphate + H2O + H(+). Its pathway is purine metabolism; 7-cyano-7-deazaguanine biosynthesis. In terms of biological role, catalyzes the ATP-dependent conversion of 7-carboxy-7-deazaguanine (CDG) to 7-cyano-7-deazaguanine (preQ(0)). The sequence is that of 7-cyano-7-deazaguanine synthase from Geobacillus kaustophilus (strain HTA426).